Reading from the N-terminus, the 81-residue chain is Defensin-like protein 45 (81 aa).

The signal sequence occupies residues 1-27 (MAITKTSATFVLLIILAASLSNFNVLA). Intrachain disulfides connect Cys-40–Cys-79, Cys-44–Cys-67, Cys-53–Cys-77, and Cys-57–Cys-78.

It belongs to the DEFL family.

The protein localises to the secreted. The protein is Defensin-like protein 45 of Arabidopsis thaliana (Mouse-ear cress).